Reading from the N-terminus, the 542-residue chain is Glutamyl-tRNA reductase 2, chloroplastic (542 aa).

Substrate contacts are provided by residues 142–145 (TCNR), S202, 207–209 (EGQ), and Q213. Residue C143 is the Nucleophile of the active site. 284-289 (GAGKMG) contacts NADP(+).

Belongs to the glutamyl-tRNA reductase family. In terms of tissue distribution, found in all tissues examined.

It is found in the plastid. The protein resides in the chloroplast. It catalyses the reaction (S)-4-amino-5-oxopentanoate + tRNA(Glu) + NADP(+) = L-glutamyl-tRNA(Glu) + NADPH + H(+). It functions in the pathway porphyrin-containing compound metabolism; protoporphyrin-IX biosynthesis; 5-aminolevulinate from L-glutamyl-tRNA(Glu): step 1/2. Catalyzes the NADPH-dependent reduction of glutamyl-tRNA(Glu) to glutamate 1-semialdehyde (GSA). The polypeptide is Glutamyl-tRNA reductase 2, chloroplastic (HEMA2) (Cucumis sativus (Cucumber)).